The following is a 352-amino-acid chain: 4-hydroxy-3-methylbut-2-en-1-yl diphosphate synthase (flavodoxin) (352 aa).

[4Fe-4S] cluster is bound by residues cysteine 262, cysteine 265, cysteine 297, and glutamate 304.

This sequence belongs to the IspG family. It depends on [4Fe-4S] cluster as a cofactor.

The catalysed reaction is (2E)-4-hydroxy-3-methylbut-2-enyl diphosphate + oxidized [flavodoxin] + H2O + 2 H(+) = 2-C-methyl-D-erythritol 2,4-cyclic diphosphate + reduced [flavodoxin]. The protein operates within isoprenoid biosynthesis; isopentenyl diphosphate biosynthesis via DXP pathway; isopentenyl diphosphate from 1-deoxy-D-xylulose 5-phosphate: step 5/6. Its function is as follows. Converts 2C-methyl-D-erythritol 2,4-cyclodiphosphate (ME-2,4cPP) into 1-hydroxy-2-methyl-2-(E)-butenyl 4-diphosphate. This is 4-hydroxy-3-methylbut-2-en-1-yl diphosphate synthase (flavodoxin) from Nitratiruptor sp. (strain SB155-2).